The chain runs to 576 residues: Ecdysone receptor (576 aa).

The modulating stretch occupies residues 1–162; it reads MSLGARGYRR…GPAPRQQEEL (162 aa). Positions 87–154 are disordered; that stretch reads CTMEQQQPQP…GEARRQKKGP (68 aa). Over residues 91-106 the composition is skewed to low complexity; that stretch reads QQQPQPQQQPQQTQPL. Over residues 107 to 117 the composition is skewed to pro residues; sequence PSMPLPMPPTT. 2 consecutive NR C4-type zinc fingers follow at residues 163–183 and 199–223; these read CLVCGDRASGYHYNALTCEGC and CKFGHACEMDIYMRRKCQECRLKKC. Residues 163 to 235 constitute a DNA-binding region (nuclear receptor); that stretch reads CLVCGDRASG…VGMRPECVVP (73 aa). The segment at 245–269 is disordered; that stretch reads EKKAQREKDKLPVSTTTVDDHMPPI. One can recognise an NR LBD domain in the interval 314-548; sequence NQKSLIARLV…FLEEIWDVAD (235 aa).

Belongs to the nuclear hormone receptor family. NR1 subfamily.

The protein resides in the nucleus. Receptor for ecdysone. Binds to ecdysone response elements (ECRES). The sequence is that of Ecdysone receptor (EcR) from Heliothis virescens (Tobacco budworm moth).